The sequence spans 796 residues: Disintegrin and metalloproteinase domain-containing protein B (796 aa).

The signal sequence occupies residues 1-23 (MKALSCLLAVIATAGSLFQHVDA). Over 24–706 (RSHARDRLNN…VSDWVSRHKP (683 aa)) the chain is Extracellular. N-linked (GlcNAc...) asparagine glycosylation is found at N33, N226, N313, and N407. A Peptidase M12B domain is found at 271-510 (RVALIGVVAD…HSILTNCLTT (240 aa)). Intrachain disulfides connect C395-C495, C448-C459, and C580-C600. Residue H431 coordinates Zn(2+). E432 is a catalytic residue. Positions 435 and 441 each coordinate Zn(2+). One can recognise a Disintegrin domain in the interval 519-608 (GQQCGNGIVE…DCPRDTHSKN (90 aa)). Residues 707–727 (IVIGVAVGVGCLLLLAILSCI) form a helical membrane-spanning segment. Topologically, residues 728–796 (CGRSKKRRPR…PGRMPSTRYA (69 aa)) are cytoplasmic. The disordered stretch occupies residues 737 to 796 (RNRKMAPINMRPMPPVYNGWTGPPPNAESPGGHPQYNHVPPPINAPPPAYPGRMPSTRYA). Pro residues predominate over residues 775–786 (VPPPINAPPPAY).

It depends on Zn(2+) as a cofactor.

The protein localises to the membrane. Its function is as follows. Probable zinc protease. This Arthroderma otae (strain ATCC MYA-4605 / CBS 113480) (Microsporum canis) protein is Disintegrin and metalloproteinase domain-containing protein B (ADM-B).